The sequence spans 302 residues: Methionyl-tRNA formyltransferase (302 aa).

108–111 serves as a coordination point for (6S)-5,6,7,8-tetrahydrofolate; that stretch reads SLLP.

This sequence belongs to the Fmt family.

The catalysed reaction is L-methionyl-tRNA(fMet) + (6R)-10-formyltetrahydrofolate = N-formyl-L-methionyl-tRNA(fMet) + (6S)-5,6,7,8-tetrahydrofolate + H(+). Attaches a formyl group to the free amino group of methionyl-tRNA(fMet). The formyl group appears to play a dual role in the initiator identity of N-formylmethionyl-tRNA by promoting its recognition by IF2 and preventing the misappropriation of this tRNA by the elongation apparatus. The protein is Methionyl-tRNA formyltransferase of Nitratiruptor sp. (strain SB155-2).